We begin with the raw amino-acid sequence, 417 residues long: UDP-N-acetylglucosamine 1-carboxyvinyltransferase (417 aa).

22–23 (KN) provides a ligand contact to phosphoenolpyruvate. Arg92 serves as a coordination point for UDP-N-acetyl-alpha-D-glucosamine. Cys116 (proton donor) is an active-site residue. Cys116 carries the 2-(S-cysteinyl)pyruvic acid O-phosphothioketal modification. UDP-N-acetyl-alpha-D-glucosamine-binding positions include 161 to 164 (KVSV), Asp305, and Ile327.

It belongs to the EPSP synthase family. MurA subfamily.

The protein resides in the cytoplasm. The enzyme catalyses phosphoenolpyruvate + UDP-N-acetyl-alpha-D-glucosamine = UDP-N-acetyl-3-O-(1-carboxyvinyl)-alpha-D-glucosamine + phosphate. It participates in cell wall biogenesis; peptidoglycan biosynthesis. In terms of biological role, cell wall formation. Adds enolpyruvyl to UDP-N-acetylglucosamine. The polypeptide is UDP-N-acetylglucosamine 1-carboxyvinyltransferase (Pelagibacter ubique (strain HTCC1062)).